A 414-amino-acid chain; its full sequence is 5-aminolevulinate synthase (414 aa).

Positions 22, 133, and 152 each coordinate substrate. Residues Ser185, His213, and Thr241 each coordinate pyridoxal 5'-phosphate. Lys244 is a catalytic residue. Lys244 carries the N6-(pyridoxal phosphate)lysine modification. Pyridoxal 5'-phosphate-binding residues include Thr273 and Thr274. Thr359 serves as a coordination point for substrate.

This sequence belongs to the class-II pyridoxal-phosphate-dependent aminotransferase family. Homodimer. The cofactor is pyridoxal 5'-phosphate.

The enzyme catalyses succinyl-CoA + glycine + H(+) = 5-aminolevulinate + CO2 + CoA. Its pathway is porphyrin-containing compound metabolism; protoporphyrin-IX biosynthesis; 5-aminolevulinate from glycine: step 1/1. The polypeptide is 5-aminolevulinate synthase (hemA) (Rickettsia prowazekii (strain Madrid E)).